A 20-amino-acid chain; its full sequence is Non-specific lipid-transfer protein (20 aa).

Belongs to the plant LTP family.

In terms of biological role, plant non-specific lipid-transfer proteins transfer phospholipids as well as galactolipids across membranes. May play a role in wax or cutin deposition in the cell walls of expanding epidermal cells and certain secretory tissues. The chain is Non-specific lipid-transfer protein from Citrus sinensis (Sweet orange).